A 364-amino-acid chain; its full sequence is tRNA 2-selenouridine synthase (364 aa).

The region spanning 14-137 (LIADTPIIDV…LRQTAIQATI (124 aa)) is the Rhodanese domain. Cys97 functions as the S-selanylcysteine intermediate in the catalytic mechanism.

Belongs to the SelU family. As to quaternary structure, monomer.

The catalysed reaction is 5-methylaminomethyl-2-thiouridine(34) in tRNA + selenophosphate + (2E)-geranyl diphosphate + H2O + H(+) = 5-methylaminomethyl-2-selenouridine(34) in tRNA + (2E)-thiogeraniol + phosphate + diphosphate. The enzyme catalyses 5-methylaminomethyl-2-thiouridine(34) in tRNA + (2E)-geranyl diphosphate = 5-methylaminomethyl-S-(2E)-geranyl-thiouridine(34) in tRNA + diphosphate. It catalyses the reaction 5-methylaminomethyl-S-(2E)-geranyl-thiouridine(34) in tRNA + selenophosphate + H(+) = 5-methylaminomethyl-2-(Se-phospho)selenouridine(34) in tRNA + (2E)-thiogeraniol. It carries out the reaction 5-methylaminomethyl-2-(Se-phospho)selenouridine(34) in tRNA + H2O = 5-methylaminomethyl-2-selenouridine(34) in tRNA + phosphate. In terms of biological role, involved in the post-transcriptional modification of the uridine at the wobble position (U34) of tRNA(Lys), tRNA(Glu) and tRNA(Gln). Catalyzes the conversion of 2-thiouridine (S2U-RNA) to 2-selenouridine (Se2U-RNA). Acts in a two-step process involving geranylation of 2-thiouridine (S2U) to S-geranyl-2-thiouridine (geS2U) and subsequent selenation of the latter derivative to 2-selenouridine (Se2U) in the tRNA chain. This Escherichia coli (strain ATCC 8739 / DSM 1576 / NBRC 3972 / NCIMB 8545 / WDCM 00012 / Crooks) protein is tRNA 2-selenouridine synthase.